The sequence spans 192 residues: Large ribosomal subunit protein uL3 (192 aa).

The protein belongs to the universal ribosomal protein uL3 family. Part of the 50S ribosomal subunit. Forms a cluster with proteins L14 and L19.

In terms of biological role, one of the primary rRNA binding proteins, it binds directly near the 3'-end of the 23S rRNA, where it nucleates assembly of the 50S subunit. This Wolinella succinogenes (strain ATCC 29543 / DSM 1740 / CCUG 13145 / JCM 31913 / LMG 7466 / NCTC 11488 / FDC 602W) (Vibrio succinogenes) protein is Large ribosomal subunit protein uL3 (rplC).